The following is a 407-amino-acid chain: Imidazolonepropionase (407 aa).

Fe(3+) is bound by residues H74 and H76. 2 residues coordinate Zn(2+): H74 and H76. 4-imidazolone-5-propanoate is bound by residues R83, Y146, and H179. Position 146 (Y146) interacts with N-formimidoyl-L-glutamate. H244 is a Fe(3+) binding site. A Zn(2+)-binding site is contributed by H244. Position 247 (Q247) interacts with 4-imidazolone-5-propanoate. Residue D319 participates in Fe(3+) binding. D319 contacts Zn(2+). N-formimidoyl-L-glutamate is bound by residues N321 and G323. T324 is a 4-imidazolone-5-propanoate binding site.

This sequence belongs to the metallo-dependent hydrolases superfamily. HutI family. The cofactor is Zn(2+). Requires Fe(3+) as cofactor.

The protein localises to the cytoplasm. The catalysed reaction is 4-imidazolone-5-propanoate + H2O = N-formimidoyl-L-glutamate. It functions in the pathway amino-acid degradation; L-histidine degradation into L-glutamate; N-formimidoyl-L-glutamate from L-histidine: step 3/3. Functionally, catalyzes the hydrolytic cleavage of the carbon-nitrogen bond in imidazolone-5-propanoate to yield N-formimidoyl-L-glutamate. It is the third step in the universal histidine degradation pathway. This chain is Imidazolonepropionase, found in Salmonella typhi.